The following is a 392-amino-acid chain: Major outer membrane porin (392 aa).

A signal peptide spans 1 to 22; the sequence is MKKLLKSALLFAAAGSALSLQA.

Belongs to the chlamydial porin (CP) (TC 1.B.2) family. As to quaternary structure, part of a disulfide cross-linked outer membrane complex (COMC) composed of the major outer membrane porin (MOMP), the small cysteine-rich protein (OmcA) and the large cysteine-rich periplasmic protein (OmcB).

Its subcellular location is the cell outer membrane. Functionally, in elementary bodies (EBs, the infectious stage, which is able to survive outside the host cell) provides the structural integrity of the outer envelope through disulfide cross-links with the small cysteine-rich protein and the large cysteine-rich periplasmic protein. It has been described in publications as the Sarkosyl-insoluble COMC (Chlamydia outer membrane complex), and serves as the functional equivalent of peptidoglycan. Its function is as follows. Permits diffusion of specific solutes through the outer membrane. In Chlamydia psittaci (Chlamydophila psittaci), this protein is Major outer membrane porin (ompA).